The sequence spans 266 residues: Apolipoprotein A-I (266 aa).

The signal sequence occupies residues 1-18 (MKAVVLTLAVLFLTGSQA). 2 repeat units span residues 67 to 88 (LKLL…EQIG) and 89 to 110 (PVTQ…QEMN). A 10 X approximate tandem repeats region spans residues 67–266 (LKLLDNWDSL…DEATKKLNSQ (200 aa)). The residue at position 109 (Met-109) is a Methionine sulfoxide. One copy of the 3; half-length repeat lies at 111 to 121 (KDLEEVKKKVQ). A run of 5 repeats spans residues 122-143 (PYLD…QKVA), 144-165 (PLGA…EKLS), 166-187 (PLGE…AQLA), 188-209 (PYGE…EGGG), and 210-231 (AALT…EKAK). A 9; half-length repeat occupies 232-242 (PALEDLRQGLL). The stretch at 243–266 (PVLENFRVSLLAAVDEATKKLNSQ) is repeat 10.

The protein belongs to the apolipoprotein A1/A4/E family. Homodimer. Interacts with APOA1BP and CLU. Component of a sperm activating protein complex (SPAP), consisting of APOA1, an immunoglobulin heavy chain, an immunoglobulin light chain and albumin. Interacts with NDRG1. Interacts with SCGB3A2. Interacts with NAXE and YJEFN3. Post-translationally, glycosylated. Palmitoylated. In terms of processing, phosphorylation sites are present in the extracellular medium.

Its subcellular location is the secreted. Participates in the reverse transport of cholesterol from tissues to the liver for excretion by promoting cholesterol efflux from tissues and by acting as a cofactor for the lecithin cholesterol acyltransferase (LCAT). As part of the SPAP complex, activates spermatozoa motility. This Leptonychotes weddellii (Weddell seal) protein is Apolipoprotein A-I (APOA1).